A 370-amino-acid chain; its full sequence is DNA primase large subunit PriL (370 aa).

Positions 230, 301, 310, and 317 each coordinate [4Fe-4S] cluster. The tract at residues 337 to 370 (EGEEAQGKEQGKEKDDGKEKENGKESEVKKKKEK) is disordered.

It belongs to the eukaryotic-type primase large subunit family. In terms of assembly, heterodimer of a small subunit (PriS) and a large subunit (PriL). [4Fe-4S] cluster is required as a cofactor.

Its function is as follows. Regulatory subunit of DNA primase, an RNA polymerase that catalyzes the synthesis of short RNA molecules used as primers for DNA polymerase during DNA replication. Stabilizes and modulates the activity of the small subunit, increasing the rate of DNA synthesis, and conferring RNA synthesis capability. The DNA polymerase activity may enable DNA primase to also catalyze primer extension after primer synthesis. May also play a role in DNA repair. In Methanosarcina mazei (strain ATCC BAA-159 / DSM 3647 / Goe1 / Go1 / JCM 11833 / OCM 88) (Methanosarcina frisia), this protein is DNA primase large subunit PriL.